The sequence spans 263 residues: Regulatory protein RecX (263 aa).

Belongs to the RecX family.

It localises to the cytoplasm. In terms of biological role, modulates RecA activity. The sequence is that of Regulatory protein RecX from Bacillus pumilus (strain SAFR-032).